We begin with the raw amino-acid sequence, 320 residues long: Cytochrome f (320 aa).

An N-terminal signal peptide occupies residues 1–35 (MQTRNAFSYIKEEITRSISVLLVIYIIIRAPISNA). Residues Tyr36, Cys56, Cys59, and His60 each coordinate heme. Residues 286-305 (VQGLLFFLASIIFAQIFLVL) traverse the membrane as a helical segment.

The protein belongs to the cytochrome f family. The 4 large subunits of the cytochrome b6-f complex are cytochrome b6, subunit IV (17 kDa polypeptide, petD), cytochrome f and the Rieske protein, while the 4 small subunits are PetG, PetL, PetM and PetN. The complex functions as a dimer. Heme is required as a cofactor.

Its subcellular location is the plastid. It is found in the chloroplast thylakoid membrane. In terms of biological role, component of the cytochrome b6-f complex, which mediates electron transfer between photosystem II (PSII) and photosystem I (PSI), cyclic electron flow around PSI, and state transitions. This Lotus japonicus (Lotus corniculatus var. japonicus) protein is Cytochrome f.